The following is a 161-amino-acid chain: Regulator of ribonuclease activity A (161 aa).

This sequence belongs to the RraA family. In terms of assembly, homotrimer. Binds to both RNA-binding sites in the C-terminal region of Rne and to RhlB.

It localises to the cytoplasm. Functionally, globally modulates RNA abundance by binding to RNase E (Rne) and regulating its endonucleolytic activity. Can modulate Rne action in a substrate-dependent manner by altering the composition of the degradosome. Modulates RNA-binding and helicase activities of the degradosome. This Serratia proteamaculans (strain 568) protein is Regulator of ribonuclease activity A.